The chain runs to 679 residues: DNA-directed RNA polymerase subunit beta' (679 aa).

Residues Cys69, Cys71, Cys87, and Cys90 each contribute to the Zn(2+) site. Residues Asp489, Asp491, and Asp493 each contribute to the Mg(2+) site.

It belongs to the RNA polymerase beta' chain family. RpoC1 subfamily. As to quaternary structure, in plastids the minimal PEP RNA polymerase catalytic core is composed of four subunits: alpha, beta, beta', and beta''. When a (nuclear-encoded) sigma factor is associated with the core the holoenzyme is formed, which can initiate transcription. The cofactor is Mg(2+). Zn(2+) is required as a cofactor.

It is found in the plastid. The protein resides in the chloroplast. It catalyses the reaction RNA(n) + a ribonucleoside 5'-triphosphate = RNA(n+1) + diphosphate. Its function is as follows. DNA-dependent RNA polymerase catalyzes the transcription of DNA into RNA using the four ribonucleoside triphosphates as substrates. This Phalaenopsis aphrodite subsp. formosana (Moth orchid) protein is DNA-directed RNA polymerase subunit beta'.